The following is a 291-amino-acid chain: POU class 2 homeobox associating-factor 2 (291 aa).

In terms of domain architecture, OCA spans 7–29 (KRVYQGVRVKHTVKDLLAEKRLR). A disordered region spans residues 176-219 (AAPVADSPSLAGPDSGSSSPYRLTSGRSGSSIPSSSQPYTLQPL). Residues 200–211 (SGRSGSSIPSSS) are compositionally biased toward low complexity.

Belongs to the POU2AF family.

In terms of biological role, transcriptional coactivator that may regulate cell type-specific differentiation pathways. This is POU class 2 homeobox associating-factor 2 (pou2af2) from Danio rerio (Zebrafish).